The following is a 285-amino-acid chain: Acetylglutamate kinase (285 aa).

Substrate contacts are provided by residues 64–65 (GG), Arg86, and Asn179.

The protein belongs to the acetylglutamate kinase family. ArgB subfamily.

The protein resides in the plastid. The protein localises to the chloroplast. The enzyme catalyses N-acetyl-L-glutamate + ATP = N-acetyl-L-glutamyl 5-phosphate + ADP. It functions in the pathway amino-acid biosynthesis; L-arginine biosynthesis; N(2)-acetyl-L-ornithine from L-glutamate: step 2/4. In terms of biological role, catalyzes the ATP-dependent phosphorylation of N-acetyl-L-glutamate. This is Acetylglutamate kinase from Pyropia yezoensis (Susabi-nori).